Here is a 140-residue protein sequence, read N- to C-terminus: 3-hydroxyacyl-[acyl-carrier-protein] dehydratase FabZ (140 aa).

Histidine 46 is an active-site residue.

This sequence belongs to the thioester dehydratase family. FabZ subfamily.

The protein localises to the cytoplasm. The enzyme catalyses a (3R)-hydroxyacyl-[ACP] = a (2E)-enoyl-[ACP] + H2O. Involved in unsaturated fatty acids biosynthesis. Catalyzes the dehydration of short chain beta-hydroxyacyl-ACPs and long chain saturated and unsaturated beta-hydroxyacyl-ACPs. This chain is 3-hydroxyacyl-[acyl-carrier-protein] dehydratase FabZ, found in Pseudothermotoga lettingae (strain ATCC BAA-301 / DSM 14385 / NBRC 107922 / TMO) (Thermotoga lettingae).